Here is a 417-residue protein sequence, read N- to C-terminus: 26S proteasome regulatory subunit RPN14 (417 aa).

6 WD repeats span residues 134–173 (AHVS…NPRT), 176–215 (GHRA…TIHT), 242–281 (ISTS…QTIQ), 285–325 (KFTC…CPVG), 330–371 (NEGT…PAIE), and 380–416 (SNDD…NLSN).

The protein belongs to the WD repeat PAAF1/RPN14 family. In terms of assembly, associates with the 19S proteasome regulatory particle (RP). Interacts directly with RPT5 and RPT6.

Its subcellular location is the cytoplasm. The protein localises to the nucleus. In terms of biological role, acts as a regulatory subunit of the 26 proteasome which is involved in the ATP-dependent degradation of ubiquitinated proteins. Is not a genuine component of the 26S proteasome, but an auxiliary factor that interacts with the proteasomal ATPase of 19S regulatory particle (RP). Acts as a chaperone which regulates the highly structured assembly of the 19S regulatory particle. Involved in the substrate specificity of the 26S proteasome and is especially involved in the degradation of ubiquitinated GCN4. May contribute to the stability of the 26S proteasome in some stress conditions. This is 26S proteasome regulatory subunit RPN14 (RPN14) from Saccharomyces cerevisiae (strain ATCC 204508 / S288c) (Baker's yeast).